The sequence spans 104 residues: Small ribosomal subunit protein uS10 (104 aa).

Belongs to the universal ribosomal protein uS10 family. Part of the 30S ribosomal subunit.

Involved in the binding of tRNA to the ribosomes. This is Small ribosomal subunit protein uS10 from Ralstonia nicotianae (strain ATCC BAA-1114 / GMI1000) (Ralstonia solanacearum).